Here is a 320-residue protein sequence, read N- to C-terminus: GTP 3',8-cyclase (320 aa).

A Radical SAM core domain is found at Gln5–Ala225. A GTP-binding site is contributed by Arg14. Residues Cys21 and Cys25 each coordinate [4Fe-4S] cluster. S-adenosyl-L-methionine is bound at residue Tyr27. Cys28 contributes to the [4Fe-4S] cluster binding site. Residue Arg64 participates in GTP binding. Gly68 lines the S-adenosyl-L-methionine pocket. Thr95 is a GTP binding site. Ser119 lines the S-adenosyl-L-methionine pocket. Residue Lys155 participates in GTP binding. Met189 serves as a coordination point for S-adenosyl-L-methionine. Residues Cys248 and Cys251 each coordinate [4Fe-4S] cluster. Arg253–Arg255 lines the GTP pocket. Cys265 serves as a coordination point for [4Fe-4S] cluster.

It belongs to the radical SAM superfamily. MoaA family. As to quaternary structure, monomer and homodimer. [4Fe-4S] cluster serves as cofactor.

The enzyme catalyses GTP + AH2 + S-adenosyl-L-methionine = (8S)-3',8-cyclo-7,8-dihydroguanosine 5'-triphosphate + 5'-deoxyadenosine + L-methionine + A + H(+). It participates in cofactor biosynthesis; molybdopterin biosynthesis. Catalyzes the cyclization of GTP to (8S)-3',8-cyclo-7,8-dihydroguanosine 5'-triphosphate. This chain is GTP 3',8-cyclase, found in Campylobacter jejuni subsp. jejuni serotype O:6 (strain 81116 / NCTC 11828).